We begin with the raw amino-acid sequence, 1293 residues long: Putative DNA-directed RNA polymerase 008R (1293 aa).

7 residues coordinate Zn(2+): Cys-61, Cys-64, Cys-71, His-74, Cys-99, Cys-102, and Cys-123. The DNA-binding element occupies 270–339 (TNRKPMAGIK…PVMVTPFNVS (70 aa)). The span at 354 to 376 (EMRDGTVHRPSEWRPSHGDHMET) shows a compositional bias: basic and acidic residues. The interval 354 to 390 (EMRDGTVHRPSEWRPSHGDHMETADGSPLGRVTRPSY) is disordered. Residues Asp-474, Asp-476, and Asp-478 each contribute to the Mg(2+) site. The tract at residues 724-734 (GQQYVGGSRPG) is alpha-amanitin binding. The tract at residues 776 to 788 (PREVFFHAKSGRE) is bridging helix.

This sequence belongs to the RNA polymerase beta' chain family.

The enzyme catalyses RNA(n) + a ribonucleoside 5'-triphosphate = RNA(n+1) + diphosphate. Its function is as follows. Component of the DNA-dependent RNA polymerase that catalyzes the transcription of DNA into RNA using the four ribonucleoside triphosphates as substrates. Largest and catalytic component of RNA polymerase II which synthesizes mRNA precursors and many functional non-coding RNAs. Forms the polymerase active center together with the second largest subunit. This is Putative DNA-directed RNA polymerase 008R from Frog virus 3 (isolate Goorha) (FV-3).